The primary structure comprises 92 residues: Small ribosomal subunit protein uS19 (92 aa).

The protein belongs to the universal ribosomal protein uS19 family.

Protein S19 forms a complex with S13 that binds strongly to the 16S ribosomal RNA. The sequence is that of Small ribosomal subunit protein uS19 from Vibrio atlanticus (strain LGP32) (Vibrio splendidus (strain Mel32)).